We begin with the raw amino-acid sequence, 92 residues long: Small ribosomal subunit protein bS18 (92 aa).

Belongs to the bacterial ribosomal protein bS18 family. As to quaternary structure, part of the 30S ribosomal subunit. Forms a tight heterodimer with protein bS6.

In terms of biological role, binds as a heterodimer with protein bS6 to the central domain of the 16S rRNA, where it helps stabilize the platform of the 30S subunit. This chain is Small ribosomal subunit protein bS18, found in Cupriavidus necator (strain ATCC 17699 / DSM 428 / KCTC 22496 / NCIMB 10442 / H16 / Stanier 337) (Ralstonia eutropha).